Consider the following 564-residue polypeptide: Dihydroxy-acid dehydratase (564 aa).

Asp80 serves as a coordination point for Mg(2+). Residue Cys121 participates in [2Fe-2S] cluster binding. The Mg(2+) site is built by Asp122 and Lys123. Position 123 is an N6-carboxylysine (Lys123). Cys194 lines the [2Fe-2S] cluster pocket. Glu447 contacts Mg(2+). Ser473 functions as the Proton acceptor in the catalytic mechanism.

Belongs to the IlvD/Edd family. In terms of assembly, homodimer. Requires [2Fe-2S] cluster as cofactor. Mg(2+) is required as a cofactor.

The catalysed reaction is (2R)-2,3-dihydroxy-3-methylbutanoate = 3-methyl-2-oxobutanoate + H2O. The enzyme catalyses (2R,3R)-2,3-dihydroxy-3-methylpentanoate = (S)-3-methyl-2-oxopentanoate + H2O. The protein operates within amino-acid biosynthesis; L-isoleucine biosynthesis; L-isoleucine from 2-oxobutanoate: step 3/4. It participates in amino-acid biosynthesis; L-valine biosynthesis; L-valine from pyruvate: step 3/4. Functions in the biosynthesis of branched-chain amino acids. Catalyzes the dehydration of (2R,3R)-2,3-dihydroxy-3-methylpentanoate (2,3-dihydroxy-3-methylvalerate) into 2-oxo-3-methylpentanoate (2-oxo-3-methylvalerate) and of (2R)-2,3-dihydroxy-3-methylbutanoate (2,3-dihydroxyisovalerate) into 2-oxo-3-methylbutanoate (2-oxoisovalerate), the penultimate precursor to L-isoleucine and L-valine, respectively. The sequence is that of Dihydroxy-acid dehydratase from Listeria monocytogenes serotype 4b (strain CLIP80459).